Here is a 367-residue protein sequence, read N- to C-terminus: Pyrimidine monooxygenase RutA (367 aa).

FMN-binding positions include 50–51 (IK), Asn-116, Glu-125, 141–142 (RY), and Ser-191.

The protein belongs to the NtaA/SnaA/DszA monooxygenase family. RutA subfamily.

The enzyme catalyses uracil + FMNH2 + NADH + O2 = (Z)-3-ureidoacrylate + FMN + NAD(+) + H2O + H(+). The catalysed reaction is thymine + FMNH2 + NADH + O2 = (Z)-2-methylureidoacrylate + FMN + NAD(+) + H2O + H(+). In terms of biological role, catalyzes the pyrimidine ring opening between N-3 and C-4 by an unusual flavin hydroperoxide-catalyzed mechanism, adding oxygen atoms in the process to yield ureidoacrylate peracid, that immediately reacts with FMN forming ureidoacrylate and FMN-N(5)-oxide. The FMN-N(5)-oxide reacts spontaneously with NADH to produce FMN. Requires the flavin reductase RutF to regenerate FMN in vivo. In Allorhizobium ampelinum (strain ATCC BAA-846 / DSM 112012 / S4) (Agrobacterium vitis (strain S4)), this protein is Pyrimidine monooxygenase RutA.